The chain runs to 465 residues: MKPLLLLVAVALGLATVVSVVSAGPEAIECWFVEDAGGGGLSKKPATLLLRHGPRGPPPRPDLDPKLYFKVDDPAGMLLAAFRRYPAGASAPHCEMSRFIPFPASAKWARSLSPEQNCPRALDGDWLLVSVSSTLFSLSSLLRPQPEPLREPVVITMATVVLTVLTHNPAPRVQLGKDAVLDLRFAYAPSALEGSPSLDAGPPPFGLEWRRQHRGKGHLLLAATPGLAGRMPPAQEKATAFAAWDDDEPWGPWTGNGTFWLPAVKPSQEGVYLATVHLPYLQGQVSLELTVHKAPRVSLTPAPVVWAAPGEAPPELLCLASHFFPAEGLEVKWELRGGPGGSSRKVEGKTWLSTIRHHSDGSVSQSGHLQLPPVTAKQHGVHYVCRVYHSSLPASGRSADVTLEVAGFSGPSIEDGIGLFLSAFLLLGLLKVLGWLAAYWTIPEVSKEKATAASLTIPRNSKKSQ.

An N-terminal signal peptide occupies residues 1–23 (MKPLLLLVAVALGLATVVSVVSA). At 24–416 (GPEAIECWFV…GFSGPSIEDG (393 aa)) the chain is on the lumenal side. Residues Cys-30 and Cys-94 are joined by a disulfide bond. N-linked (GlcNAc...) asparagine glycosylation is present at Asn-256. Residues 295 to 402 (PRVSLTPAPV…PASGRSADVT (108 aa)) form the Ig-like C1-type domain. Cys-318 and Cys-385 are oxidised to a cystine. Residues 417–437 (IGLFLSAFLLLGLLKVLGWLA) traverse the membrane as a helical segment. Residues 438–465 (AYWTIPEVSKEKATAASLTIPRNSKKSQ) are Cytoplasmic-facing.

In terms of assembly, heterodimer with PDIA3; disulfide-linked. Obligatory mediator for the interaction between newly assembled MHC class I molecules, calreticulin, PDIA3 and TAP. Up to 4 MHC class I/tapasin complexes bind to 1 TAP. Interacts with HLA-G-B2M complex; this interaction is required for loading of high affinity peptides. On its own or as part of MHC class I peptide loading complex, interacts with ligand-free MR1 or MR1-B2M complex, providing for stable MR1 pools ready for metabolite antigen processing.

Its subcellular location is the endoplasmic reticulum membrane. Its function is as follows. Involved in the association of MHC class I with transporter associated with antigen processing (TAP) and in the assembly of MHC class I with peptide (peptide loading). The chain is Tapasin (Tapbp) from Mus musculus (Mouse).